A 288-amino-acid polypeptide reads, in one-letter code: ATP synthase gamma chain (288 aa).

The protein belongs to the ATPase gamma chain family. F-type ATPases have 2 components, CF(1) - the catalytic core - and CF(0) - the membrane proton channel. CF(1) has five subunits: alpha(3), beta(3), gamma(1), delta(1), epsilon(1). CF(0) has three main subunits: a, b and c.

It localises to the cell membrane. Produces ATP from ADP in the presence of a proton gradient across the membrane. The gamma chain is believed to be important in regulating ATPase activity and the flow of protons through the CF(0) complex. This chain is ATP synthase gamma chain, found in Staphylococcus saprophyticus subsp. saprophyticus (strain ATCC 15305 / DSM 20229 / NCIMB 8711 / NCTC 7292 / S-41).